Reading from the N-terminus, the 320-residue chain is Nod factor export ATP-binding protein I (320 aa).

Residues 15–245 form the ABC transporter domain; the sequence is VSATGVWKKR…LGALKILEID (231 aa). Position 47 to 54 (47 to 54) interacts with ATP; that stretch reads GTNGAGKS.

It belongs to the ABC transporter superfamily. Lipooligosaccharide exporter (TC 3.A.1.102) family. As to quaternary structure, the complex is composed of two ATP-binding proteins (NodI) and two transmembrane proteins (NodJ).

Its subcellular location is the cell inner membrane. In terms of biological role, part of the ABC transporter complex NodIJ involved in the export of the nodulation factors (Nod factors), the bacterial signal molecules that induce symbiosis and subsequent nodulation induction. Nod factors are LCO (lipo-chitin oligosaccharide), a modified beta-1,4-linked N-acetylglucosamine oligosaccharide. This subunit is responsible for energy coupling to the transport system. This Azorhizobium caulinodans (strain ATCC 43989 / DSM 5975 / JCM 20966 / LMG 6465 / NBRC 14845 / NCIMB 13405 / ORS 571) protein is Nod factor export ATP-binding protein I.